The chain runs to 96 residues: Auxin-responsive protein SAUR29 (96 aa).

This sequence belongs to the ARG7 family.

Its subcellular location is the cell membrane. Its function is as follows. Functions as a positive effector of cell expansion through modulation of auxin transport. Involved in thermo-responsiveness of plant architecture. Enhances plasma membrane H(+)-ATPase. This Arabidopsis thaliana (Mouse-ear cress) protein is Auxin-responsive protein SAUR29.